The primary structure comprises 788 residues: Multi-functional prenyltransferase ltmE (788 aa).

Positions 18 and 51 each coordinate substrate. Aspartate 58 contacts Mg(2+). Residues arginine 67, lysine 151, threonine 152, glutamine 182, asparagine 189, and lysine 199 each contribute to the substrate site. Residues 283 to 337 (DTLDGDDLTRPSTITQHEQDDHVDRAAIDAKSDASGSSNKSLTPPETAPTTDTLS) form a disordered region. A compositionally biased stretch (basic and acidic residues) spans 299-314 (HEQDDHVDRAAIDAKS). The span at 316 to 337 (ASGSSNKSLTPPETAPTTDTLS) shows a compositional bias: polar residues. 404–405 (MA) lines the L-tryptophan pocket. Substrate is bound by residues arginine 427, arginine 599, lysine 601, tyrosine 603, and tyrosine 687.

In the N-terminal section; belongs to the FPP/GGPP synthase family. It in the C-terminal section; belongs to the tryptophan dimethylallyltransferase family. Mg(2+) serves as cofactor.

The protein operates within secondary metabolite biosynthesis. Functionally, multi-functional prenyltransferase; part of the gene cluster that mediates the biosynthesis of lolitrems, indole-diterpene mycotoxins that are potent tremorgens in mammals, and are synthesized by clavicipitaceous fungal endophytes in association with their grass hosts. The geranylgeranyl diphosphate (GGPP) synthase ltmG is proposed to catalyze the first step in lolitrem biosynthesis. LtmG catalyzes a series of iterative condensations of isopentenyl diphosphate (IPP) with dimethylallyl diphosphate (DMAPP), geranyl diphosphate (GPP), and farnesyl diphosphate (FPP), to form GGPP. GGPP then condenses with indole-3-glycerol phosphate to form 3-geranylgeranylindole, an acyclic intermediate, to be incorporated into paxilline. Either ltmG or ltmC could be responsible for this step, as both are putative prenyl transferases. The FAD-dependent monooxygenase ltmM then catalyzes the epoxidation of the two terminal alkenes of the geranylgeranyl moiety, which is subsequently cyclized by ltmB, to paspaline. The cytochrome P450 monooxygenases ltmQ and ltmP can sequentially oxidize paspaline to terpendole E and terpendole F. Alternatively, ltmP converts paspaline to an intermediate which is oxidized by ltmQ to terpendole F. LtmF, ltmK, ltmE and ltmJ appear to be unique to the epichloe endophytes. The prenyltransferase ltmF is involved in the 27-hydroxyl-O-prenylation. The cytochrome P450 monooxygenase ltmK is required for the oxidative acetal ring formation. The multi-functional prenyltransferase ltmE is required for C20- and C21-prenylations of the indole ring of paspalanes and acts together with the cytochrome P450 monooxygenase ltmJ to yield lolitremanes by multiple oxidations and ring closures. The stereoisomer pairs of lolitriol and lolitrem N or lolitrem B and lolitrem F may be attributed to variations in the way in which ring closure can occur under the action of ltmJ. While the major product of this pathway is lolitrem B, the prenyl transferases and cytochrome P450 monooxygenases identified in this pathway have a remarkable versatility in their regio- and stereo-specificities to generate a diverse range of metabolites that are products of a metabolic grid rather than a linear pathway. This chain is Multi-functional prenyltransferase ltmE, found in Epichloe festucae var. lolii (Neotyphodium lolii).